We begin with the raw amino-acid sequence, 239 residues long: Carboxy-S-adenosyl-L-methionine synthase (239 aa).

Residues Y35, 64 to 66 (GSS), 114 to 115 (DL), N129, and R196 each bind S-adenosyl-L-methionine.

This sequence belongs to the class I-like SAM-binding methyltransferase superfamily. Cx-SAM synthase family. Homodimer.

It carries out the reaction prephenate + S-adenosyl-L-methionine = carboxy-S-adenosyl-L-methionine + 3-phenylpyruvate + H2O. In terms of biological role, catalyzes the conversion of S-adenosyl-L-methionine (SAM) to carboxy-S-adenosyl-L-methionine (Cx-SAM). This Helicobacter hepaticus (strain ATCC 51449 / 3B1) protein is Carboxy-S-adenosyl-L-methionine synthase.